Reading from the N-terminus, the 503-residue chain is Na(+)-translocating NADH-quinone reductase subunit B (503 aa).

The next 4 membrane-spanning stretches (helical) occupy residues 55–75 (MMLVVIALFPATFLAIWNSGI), 120–140 (IFLPLLIISYTVGGACEVLFA), 161–181 (TLPPTIPYWMAALGIAFGVVV), and 186–206 (FGGTGMNILNPALSGRAFLFF). An FMN phosphoryl threonine modification is found at T248. A run of 5 helical transmembrane segments spans residues 361 to 381 (TSTFACLLGAVFLVITGIASW), 387 to 407 (FGIGAFVTAWLFKICSILIAG), 417 to 437 (FFIPAYRQLFLGGLAFGLVFM), 452 to 472 (WIYGLFIGFMTIIIRLINPAY), and 475 to 495 (GVMLAILLGNVFAPLLDYFAV).

The protein belongs to the NqrB/RnfD family. As to quaternary structure, composed of six subunits; NqrA, NqrB, NqrC, NqrD, NqrE and NqrF. It depends on FMN as a cofactor.

The protein localises to the cell inner membrane. It catalyses the reaction a ubiquinone + n Na(+)(in) + NADH + H(+) = a ubiquinol + n Na(+)(out) + NAD(+). Functionally, NQR complex catalyzes the reduction of ubiquinone-1 to ubiquinol by two successive reactions, coupled with the transport of Na(+) ions from the cytoplasm to the periplasm. NqrA to NqrE are probably involved in the second step, the conversion of ubisemiquinone to ubiquinol. This Chlamydia abortus (strain DSM 27085 / S26/3) (Chlamydophila abortus) protein is Na(+)-translocating NADH-quinone reductase subunit B.